Reading from the N-terminus, the 719-residue chain is Lanosterol synthase (719 aa).

The PFTB 1 repeat unit spans residues 118-160; it reads RIEVIRYLVNHANPEDGGWGIHIEGKSTVFGTALNYVVLRILG. Asp451 serves as the catalytic Proton donor. PFTB repeat units lie at residues 478-523, 555-595, and 604-645; these read LKDS…MIEH, VKNA…SCVK, and SRRA…VVQT.

It belongs to the terpene cyclase/mutase family.

The enzyme catalyses (S)-2,3-epoxysqualene = lanosterol. It participates in terpene metabolism; lanosterol biosynthesis; lanosterol from farnesyl diphosphate: step 3/3. Catalyzes the cyclization of (S)-2,3 oxidosqualene to lanosterol, a reaction that forms the sterol nucleus. This Pneumocystis carinii protein is Lanosterol synthase (ERG7).